The primary structure comprises 546 residues: Plastidic glucose transporter 4 (546 aa).

Transmembrane regions (helical) follow at residues Val105–Val125, Trp148–Ala168, Ile182–Val202, Leu205–Ile225, Leu240–Pro260, Thr265–Pro285, Val345–Val365, Val381–Leu401, Leu410–Thr430, Leu441–Pro461, Ala477–Leu497, and Phe503–Ile523.

The protein belongs to the major facilitator superfamily. Sugar transporter (TC 2.A.1.1) family.

It is found in the plastid. Its subcellular location is the chloroplast inner membrane. May be involved in the efflux of glucose towards the cytosol. This is Plastidic glucose transporter 4 from Arabidopsis thaliana (Mouse-ear cress).